The following is a 339-amino-acid chain: O-methyltransferase 7 (339 aa).

S-adenosyl-L-methionine-binding residues include G186, D209, S232, F233, and K246. The active-site Proton acceptor is H250.

This sequence belongs to the class I-like SAM-binding methyltransferase superfamily. Cation-independent O-methyltransferase family. COMT subfamily.

It carries out the reaction (3,5-dichloro-2,4,6-trihydroxyphenyl)hexan-1-one + S-adenosyl-L-methionine = 1-(3,5-dichloro-2,6-dihydroxy-4-methoxyphenyl)hexan-1-one + S-adenosyl-L-homocysteine + H(+). This chain is O-methyltransferase 7 (omt7), found in Dictyostelium discoideum (Social amoeba).